Here is an 83-residue protein sequence, read N- to C-terminus: Small ribosomal subunit protein bS16 (83 aa).

It belongs to the bacterial ribosomal protein bS16 family.

The protein is Small ribosomal subunit protein bS16 of Finegoldia magna (strain ATCC 29328 / DSM 20472 / WAL 2508) (Peptostreptococcus magnus).